Consider the following 339-residue polypeptide: Phenylalanine--tRNA ligase alpha subunit (339 aa).

Glutamate 253 provides a ligand contact to Mg(2+).

Belongs to the class-II aminoacyl-tRNA synthetase family. Phe-tRNA synthetase alpha subunit type 1 subfamily. In terms of assembly, tetramer of two alpha and two beta subunits. Requires Mg(2+) as cofactor.

Its subcellular location is the cytoplasm. It catalyses the reaction tRNA(Phe) + L-phenylalanine + ATP = L-phenylalanyl-tRNA(Phe) + AMP + diphosphate + H(+). In Alcanivorax borkumensis (strain ATCC 700651 / DSM 11573 / NCIMB 13689 / SK2), this protein is Phenylalanine--tRNA ligase alpha subunit.